Here is a 37-residue protein sequence, read N- to C-terminus: MKVQPSVKKICEKCKVIRRHGRVMVICDNLRHKQRQG.

This sequence belongs to the bacterial ribosomal protein bL36 family.

In Nocardia farcinica (strain IFM 10152), this protein is Large ribosomal subunit protein bL36.